A 220-amino-acid chain; its full sequence is ATP synthase subunit delta (220 aa).

The protein belongs to the ATPase delta chain family. As to quaternary structure, F-type ATPases have 2 components, F(1) - the catalytic core - and F(0) - the membrane proton channel. F(1) has five subunits: alpha(3), beta(3), gamma(1), delta(1), epsilon(1). F(0) has three main subunits: a(1), b(2) and c(10-14). The alpha and beta chains form an alternating ring which encloses part of the gamma chain. F(1) is attached to F(0) by a central stalk formed by the gamma and epsilon chains, while a peripheral stalk is formed by the delta and b chains.

The protein localises to the cell inner membrane. Its function is as follows. F(1)F(0) ATP synthase produces ATP from ADP in the presence of a proton or sodium gradient. F-type ATPases consist of two structural domains, F(1) containing the extramembraneous catalytic core and F(0) containing the membrane proton channel, linked together by a central stalk and a peripheral stalk. During catalysis, ATP synthesis in the catalytic domain of F(1) is coupled via a rotary mechanism of the central stalk subunits to proton translocation. Functionally, this protein is part of the stalk that links CF(0) to CF(1). It either transmits conformational changes from CF(0) to CF(1) or is implicated in proton conduction. In Gluconobacter oxydans (strain 621H) (Gluconobacter suboxydans), this protein is ATP synthase subunit delta.